Here is a 434-residue protein sequence, read N- to C-terminus: Glutamate/glutamine/aspartate/asparagine transport system permease protein BztC (434 aa).

The next 10 helical transmembrane spans lie at 41–61 (LTVF…PWLL), 113–133 (LFVT…DALP), 135–155 (KLIW…WGGP), 156–176 (IWGP…FTAL), 180–200 (LGVP…WLYA), 227–247 (FLLA…LGIL), 272–292 (GVPL…FLPP), 298–318 (LILR…AEVI), 360–380 (IVSS…VGLF), and 398–418 (GTYW…NFSM). Positions 227 to 422 (FLLALVIGVT…LFNFSMSRYS (196 aa)) constitute an ABC transmembrane type-1 domain.

It belongs to the binding-protein-dependent transport system permease family. HisMQ subfamily. BztB and BztC form a heterodimer which can form a membrane complex with a homodimer of BztD.

It localises to the cell inner membrane. Functionally, part of a binding-protein-dependent transport system for glutamate, glutamine, aspartate and asparagine. Probably responsible for the translocation of the substrate across the membrane. The chain is Glutamate/glutamine/aspartate/asparagine transport system permease protein BztC (bztC) from Rhodobacter capsulatus (strain ATCC BAA-309 / NBRC 16581 / SB1003).